The chain runs to 336 residues: Cellodextrinase A (336 aa).

Glu141 acts as the Proton donor in catalysis.

This sequence belongs to the glycosyl hydrolase 5 (cellulase A) family.

It localises to the secreted. Functionally, crystalline cellulose degradation. The chain is Cellodextrinase A (celA) from Ruminococcus flavefaciens.